A 259-amino-acid polypeptide reads, in one-letter code: Ribosomal RNA large subunit methyltransferase E (259 aa).

Gly-58, Trp-60, Asp-78, Asp-96, and Asp-120 together coordinate S-adenosyl-L-methionine. Catalysis depends on Lys-160, which acts as the Proton acceptor.

Belongs to the class I-like SAM-binding methyltransferase superfamily. RNA methyltransferase RlmE family.

Its subcellular location is the cytoplasm. It catalyses the reaction uridine(2552) in 23S rRNA + S-adenosyl-L-methionine = 2'-O-methyluridine(2552) in 23S rRNA + S-adenosyl-L-homocysteine + H(+). Functionally, specifically methylates the uridine in position 2552 of 23S rRNA at the 2'-O position of the ribose in the fully assembled 50S ribosomal subunit. The chain is Ribosomal RNA large subunit methyltransferase E from Methanococcus vannielii (strain ATCC 35089 / DSM 1224 / JCM 13029 / OCM 148 / SB).